A 340-amino-acid polypeptide reads, in one-letter code: Zinc finger protein 367 (340 aa).

The tract at residues 96–140 (LPTLRGAPPSSASVAAVSGGEDEEEASSPDSGHLKDGIRRGRPRA) is disordered. Positions 101-114 (GAPPSSASVAAVSG) are enriched in low complexity. Positions 127-140 (GHLKDGIRRGRPRA) are enriched in basic and acidic residues. 2 consecutive C2H2-type zinc fingers follow at residues 157-179 (IRCN…KRTH) and 185-209 (YLCD…QRLH). The segment at 280 to 317 (KGKLVQKADQEQQDPLEYLQSDEEDDEKSGAQRRLQEQ) is disordered. Residues 299-332 (QSDEEDDEKSGAQRRLQEQRERLHGALALIELAN) are a coiled coil. Ser-300 bears the Phosphoserine mark. Positions 307–317 (KSGAQRRLQEQ) are enriched in basic and acidic residues.

The protein belongs to the krueppel C2H2-type zinc-finger protein family.

Its subcellular location is the nucleus. Its function is as follows. Transcriptional activator. May be involved in transcriptional activation of erythroid genes. The protein is Zinc finger protein 367 (Znf367) of Rattus norvegicus (Rat).